The sequence spans 98 residues: Feather keratin 4 (98 aa).

An N-acetylserine modification is found at serine 2.

This sequence belongs to the avian keratin family. The avian keratins (F-ker, S-ker, C-ker and B-ker) are a complex mixture of very similar polypeptides.

This is Feather keratin 4 from Gallus gallus (Chicken).